Consider the following 249-residue polypeptide: Phosphate import ATP-binding protein PstB (249 aa).

Residues 5–244 enclose the ABC transporter domain; that stretch reads LRIEDLHFWY…PEKDRTEAYV (240 aa). 37–44 provides a ligand contact to ATP; sequence GPSGCGKS.

This sequence belongs to the ABC transporter superfamily. Phosphate importer (TC 3.A.1.7) family. As to quaternary structure, the complex is composed of two ATP-binding proteins (PstB), two transmembrane proteins (PstC and PstA) and a solute-binding protein (PstS).

Its subcellular location is the cell inner membrane. The catalysed reaction is phosphate(out) + ATP + H2O = ADP + 2 phosphate(in) + H(+). Functionally, part of the ABC transporter complex PstSACB involved in phosphate import. Responsible for energy coupling to the transport system. The protein is Phosphate import ATP-binding protein PstB of Salinibacter ruber (strain DSM 13855 / M31).